The primary structure comprises 123 residues: Urotensin-2 (123 aa).

A signal peptide spans 1–20; the sequence is MDRVPFCCLLFIGLLNPLLS. Propeptides lie at residues 21 to 104 and 107 to 109; these read LPVT…LART and QHK. The segment at 57–88 is disordered; it reads RQTMGTEAGESPGEAGPSTETPTPRGSMRKAF. Cys-117 and Cys-122 are disulfide-bonded.

The protein belongs to the urotensin-2 family. Brain specific. Predominantly expressed in motoneurons of the brainstem and spinal cord.

Its subcellular location is the secreted. Highly potent vasoconstrictor. In Mus musculus (Mouse), this protein is Urotensin-2 (Uts2).